The following is a 52-amino-acid chain: Transcriptional regulator SlrA (52 aa).

Residues 1 to 38 form the Sin domain; sequence MKTHVKKDLDKGWHMLIQEARSIGLGIHDVRQFLESET.

Component of the SlrR/SlrA complex.

Its function is as follows. Required specifically for induction of eps and yqxM operons by antagonizing SinR. Regulates SlrR activity. Controls the initiation of biofilm formation. In Bacillus subtilis (strain 168), this protein is Transcriptional regulator SlrA (slrA).